The chain runs to 386 residues: Galactokinase (386 aa).

32–35 (EHTD) is a substrate binding site. Residues Ser-66 and 123–129 (GASLSSS) each bind ATP. 2 residues coordinate Mg(2+): Ser-129 and Glu-161. Asp-173 serves as the catalytic Proton acceptor. Tyr-223 contributes to the substrate binding site.

It belongs to the GHMP kinase family. GalK subfamily.

Its subcellular location is the cytoplasm. It carries out the reaction alpha-D-galactose + ATP = alpha-D-galactose 1-phosphate + ADP + H(+). The protein operates within carbohydrate metabolism; galactose metabolism. Catalyzes the transfer of the gamma-phosphate of ATP to D-galactose to form alpha-D-galactose-1-phosphate (Gal-1-P). The chain is Galactokinase from Staphylococcus saprophyticus subsp. saprophyticus (strain ATCC 15305 / DSM 20229 / NCIMB 8711 / NCTC 7292 / S-41).